The sequence spans 279 residues: Tryptophan synthase alpha chain (279 aa).

Residues glutamate 50 and aspartate 61 each act as proton acceptor in the active site.

The protein belongs to the TrpA family. In terms of assembly, tetramer of two alpha and two beta chains.

The catalysed reaction is (1S,2R)-1-C-(indol-3-yl)glycerol 3-phosphate + L-serine = D-glyceraldehyde 3-phosphate + L-tryptophan + H2O. Its pathway is amino-acid biosynthesis; L-tryptophan biosynthesis; L-tryptophan from chorismate: step 5/5. Its function is as follows. The alpha subunit is responsible for the aldol cleavage of indoleglycerol phosphate to indole and glyceraldehyde 3-phosphate. This is Tryptophan synthase alpha chain from Mesorhizobium japonicum (strain LMG 29417 / CECT 9101 / MAFF 303099) (Mesorhizobium loti (strain MAFF 303099)).